A 77-amino-acid chain; its full sequence is Defensin-like protein 91 (77 aa).

The signal sequence occupies residues 1-27 (METKKISYFLLPSLMIVALIFQPMCSA). 4 disulfides stabilise this stretch: Cys-38-Cys-75, Cys-43-Cys-64, Cys-49-Cys-73, and Cys-53-Cys-74.

It belongs to the DEFL family.

It localises to the secreted. This chain is Defensin-like protein 91 (LCR47), found in Arabidopsis thaliana (Mouse-ear cress).